Reading from the N-terminus, the 223-residue chain is Uracil-DNA glycosylase (223 aa).

D61 serves as the catalytic Proton acceptor.

Belongs to the uracil-DNA glycosylase (UDG) superfamily. UNG family.

The protein resides in the cytoplasm. The enzyme catalyses Hydrolyzes single-stranded DNA or mismatched double-stranded DNA and polynucleotides, releasing free uracil.. Its function is as follows. Excises uracil residues from the DNA which can arise as a result of misincorporation of dUMP residues by DNA polymerase or due to deamination of cytosine. This chain is Uracil-DNA glycosylase, found in Haemophilus ducreyi (strain 35000HP / ATCC 700724).